The following is a 401-amino-acid chain: Calcium-responsive transcription coactivator (401 aa).

Residues 1–148 (MSVAFASARP…TLPTTSMSMS (148 aa)) are N-terminal auto-inhibitory domain; necessary for interaction with SMARCA4/BRG1. An SH2-binding motif is present at residues 50–53 (YQQI). Disordered regions lie at residues 72–171 (QSLL…VPMQ) and 214–401 (TRAR…NYQQ). The segment covering 85 to 106 (LGPGALSQSGSSQGLHPQGSLS) has biased composition (low complexity). Over residues 128-137 (NHVSMQQTAQ) the composition is skewed to polar residues. The span at 138-149 (STLPTTSMSMSG) shows a compositional bias: low complexity. A methionine-rich intra-molecular domain region spans residues 149–237 (GSGHGTGPGY…GGSMMGQRPM (89 aa)). Residues 251-322 (YLGQEEYYSE…SQYSQQQAGY (72 aa)) are MFD domain. 2 stretches are compositionally biased toward polar residues: residues 260-276 (EQYS…SQQY) and 285-294 (AYQQSSYTEQ). Positions 295 to 304 (SYDRSFEDPT) are enriched in basic and acidic residues. The span at 310–374 (GGNSQYSQQQ…QGQGQQYGSY (65 aa)) shows a compositional bias: low complexity. A necessary for nuclear localization region spans residues 339 to 401 (NQQSYPGQQQ…EQGQYGNYQQ (63 aa)). The SH2-binding signature appears at 358–361 (SQYS). Over residues 375-387 (RTSQTGPSAQQQR) the composition is skewed to polar residues. The SH3-binding motif lies at 376-384 (TSQTGPSAQ). The segment covering 389-401 (YGYEQGQYGNYQQ) has biased composition (low complexity). Residues 392–401 (EQGQYGNYQQ) are necessary for interaction with CREBBP and for the recruitment of CREBBP to the nuclear bodies. An SH2-binding motif is present at residues 396-399 (YGNY).

It belongs to the SS18 family. As to quaternary structure, homodimer. Dimerization may be necessary for its function in neuronal dendritic development. Interacts (via C-terminus) with CREBBP (via N-terminus), EP300 and SMARCA4/BRG1. Interacts with the nBAF complex. Association with CREBBP facilitates transcription while the association with SMARCA4/BRG1 suppresses CREST-mediated transcription in resting neurons. As to expression, brain (at protein level). Also found in the heart, liver, kidney and testis.

It is found in the nucleus. Its subcellular location is the chromosome. It localises to the centromere. The protein localises to the kinetochore. In terms of biological role, transcriptional activator which is required for calcium-dependent dendritic growth and branching in cortical neurons. Recruits CREB-binding protein (CREBBP) to nuclear bodies. Component of the CREST-BRG1 complex, a multiprotein complex that regulates promoter activation by orchestrating a calcium-dependent release of a repressor complex and a recruitment of an activator complex. In resting neurons, transcription of the c-FOS promoter is inhibited by BRG1-dependent recruitment of a phospho-RB1-HDAC1 repressor complex. Upon calcium influx, RB1 is dephosphorylated by calcineurin, which leads to release of the repressor complex. At the same time, there is increased recruitment of CREBBP to the promoter by a CREST-dependent mechanism, which leads to transcriptional activation. The CREST-BRG1 complex also binds to the NR2B promoter, and activity-dependent induction of NR2B expression involves a release of HDAC1 and recruitment of CREBBP. In Rattus norvegicus (Rat), this protein is Calcium-responsive transcription coactivator (Ss18l1).